We begin with the raw amino-acid sequence, 492 residues long: N-succinylglutamate 5-semialdehyde dehydrogenase (492 aa).

NAD(+) is bound at residue 220-225 (GSASTG). Residues glutamate 243 and cysteine 277 contribute to the active site.

This sequence belongs to the aldehyde dehydrogenase family. AstD subfamily.

It catalyses the reaction N-succinyl-L-glutamate 5-semialdehyde + NAD(+) + H2O = N-succinyl-L-glutamate + NADH + 2 H(+). The protein operates within amino-acid degradation; L-arginine degradation via AST pathway; L-glutamate and succinate from L-arginine: step 4/5. Catalyzes the NAD-dependent reduction of succinylglutamate semialdehyde into succinylglutamate. This chain is N-succinylglutamate 5-semialdehyde dehydrogenase, found in Salmonella paratyphi A (strain AKU_12601).